The chain runs to 452 residues: Glutamyl-tRNA(Gln) amidotransferase subunit A (452 aa).

Residues K56 and S131 each act as charge relay system in the active site. Catalysis depends on S155, which acts as the Acyl-ester intermediate.

The protein belongs to the amidase family. GatA subfamily. As to quaternary structure, heterotrimer of A, B and C subunits.

The enzyme catalyses L-glutamyl-tRNA(Gln) + L-glutamine + ATP + H2O = L-glutaminyl-tRNA(Gln) + L-glutamate + ADP + phosphate + H(+). In terms of biological role, allows the formation of correctly charged Gln-tRNA(Gln) through the transamidation of misacylated Glu-tRNA(Gln) in organisms which lack glutaminyl-tRNA synthetase. The reaction takes place in the presence of glutamine and ATP through an activated gamma-phospho-Glu-tRNA(Gln). The chain is Glutamyl-tRNA(Gln) amidotransferase subunit A from Campylobacter concisus (strain 13826).